The primary structure comprises 508 residues: Aromatic-L-amino-acid decarboxylase (508 aa).

Residue threonine 82 participates in substrate binding. Positions 148 and 149 each coordinate pyridoxal 5'-phosphate. Histidine 192 is a substrate binding site. The pyridoxal 5'-phosphate site is built by threonine 246 and asparagine 300. N6-(pyridoxal phosphate)lysine is present on lysine 303.

Belongs to the group II decarboxylase family. As to quaternary structure, homodimer. The cofactor is pyridoxal 5'-phosphate.

The enzyme catalyses L-dopa + H(+) = dopamine + CO2. It carries out the reaction 5-hydroxy-L-tryptophan + H(+) = serotonin + CO2. Functionally, catalyzes the decarboxylation of L-3,4-dihydroxyphenylalanine (DOPA) to dopamine, L-5-hydroxytryptophan to serotonin and L-tryptophan to tryptamine. This is Aromatic-L-amino-acid decarboxylase (Ddc) from Manduca sexta (Tobacco hawkmoth).